The chain runs to 104 residues: MIRKATVMKVYKDKYDDYKQRHDKLWPEMAEMLKAHGVHHYSIFLLEETGQLFAYLLVEDEDSFSEVAKTEICQKWWAYMAPLMETNDDLSPVSHDLKEVFYLA.

Residue Tyr18 coordinates substrate. His22 (proton donor) is an active-site residue. Residues Tyr41 and 76-77 (WW) each bind substrate.

It belongs to the rhamnose mutarotase family. As to quaternary structure, homodimer.

Its subcellular location is the cytoplasm. The catalysed reaction is alpha-L-rhamnose = beta-L-rhamnose. The protein operates within carbohydrate metabolism; L-rhamnose metabolism. Its function is as follows. Involved in the anomeric conversion of L-rhamnose. The protein is L-rhamnose mutarotase of Shouchella clausii (strain KSM-K16) (Alkalihalobacillus clausii).